The chain runs to 319 residues: 7-methylguanosine phosphate-specific 5'-nucleotidase (319 aa).

The Nucleophile role is filled by Asp-55. Mg(2+) is bound by residues Asp-55 and Asp-57. The Proton donor role is filled by Asp-57. Glu-103 contacts CMP. N(7)-methyl-GMP contacts are provided by Glu-103 and Ser-124. A substrate-binding site is contributed by 171–172 (SA). Asp-245 provides a ligand contact to Mg(2+).

It belongs to the pyrimidine 5'-nucleotidase family. Monomer. Requires Mg(2+) as cofactor.

The catalysed reaction is N(7)-methyl-GMP + H2O = N(7)-methylguanosine + phosphate. It carries out the reaction CMP + H2O = cytidine + phosphate. The enzyme catalyses a ribonucleoside 5'-phosphate + H2O = a ribonucleoside + phosphate. Inhibited by high levels of AMP. Functionally, specifically hydrolyzes 7-methylguanosine monophosphate (m(7)GMP) to 7-methylguanosine and inorganic phosphate. Also able to mediate hydrolysis of diphosphate (m(7)GDP) to 7-methylguanosine and 2 inorganic phosphate with lower activity. The specific activity for m(7)GMP may protect cells against undesired salvage of m(7)GMP and its incorporation into nucleic acids. Also has weak activity for CMP. UMP and purine nucleotides are poor substrates. This is 7-methylguanosine phosphate-specific 5'-nucleotidase from Drosophila melanogaster (Fruit fly).